We begin with the raw amino-acid sequence, 710 residues long: Polyribonucleotide nucleotidyltransferase (710 aa).

Positions 486 and 492 each coordinate Mg(2+). In terms of domain architecture, KH spans 553-612 (PRIHTIKISVDKIKDVIGKGGSVIRALTEETGTTIEIEDDGTVKIAATDGDKAKFAIRRI). The S1 motif domain maps to 622–690 (GRIYNGKVTR…RQGRVRLSIK (69 aa)). The disordered stretch occupies residues 690-710 (KEAGEQAQPEAEAVPAAPEAE). Low complexity predominate over residues 694-710 (EQAQPEAEAVPAAPEAE).

It belongs to the polyribonucleotide nucleotidyltransferase family. As to quaternary structure, component of the RNA degradosome, which is a multiprotein complex involved in RNA processing and mRNA degradation. Mg(2+) serves as cofactor.

It is found in the cytoplasm. It carries out the reaction RNA(n+1) + phosphate = RNA(n) + a ribonucleoside 5'-diphosphate. Its function is as follows. Involved in mRNA degradation. Catalyzes the phosphorolysis of single-stranded polyribonucleotides processively in the 3'- to 5'-direction. The polypeptide is Polyribonucleotide nucleotidyltransferase (Erwinia tasmaniensis (strain DSM 17950 / CFBP 7177 / CIP 109463 / NCPPB 4357 / Et1/99)).